A 946-amino-acid chain; its full sequence is Atos homolog protein A (946 aa).

The segment at Ala24–Thr32 is transactivation domain 1 (TAD1). Residues Glu34 to Gly43 show a composition bias toward basic and acidic residues. Disordered stretches follow at residues Glu34 to Lys58, Ser246 to Pro271, Phe484 to Gln524, and Ser547 to Val567. Polar residues-rich tracts occupy residues Val247–Ala267 and Phe484–Ile500. 2 stretches are compositionally biased toward basic and acidic residues: residues Leu503–Ile517 and Ser547–Pro560. Residues Leu749–Tyr806 are required for macropage invasion. The interval Phe833 to Lys841 is transactivation domain 2 (TAD2).

The protein belongs to the ATOS family.

The protein localises to the nucleus. Transcription regulator that syncronizes transcriptional and translational programs to promote macrophage invasion of tissues. The polypeptide is Atos homolog protein A (atosa) (Xenopus tropicalis (Western clawed frog)).